Reading from the N-terminus, the 369-residue chain is Methionine import ATP-binding protein MetN (369 aa).

Positions 31–266 constitute an ABC transporter domain; it reads VEMKDVRRMF…PQSPVTQSML (236 aa). 63-70 provides a ligand contact to ATP; the sequence is GRSGAGKS.

It belongs to the ABC transporter superfamily. Methionine importer (TC 3.A.1.24) family. The complex is composed of two ATP-binding proteins (MetN), two transmembrane proteins (MetI) and a solute-binding protein (MetQ).

It is found in the cell inner membrane. It carries out the reaction L-methionine(out) + ATP + H2O = L-methionine(in) + ADP + phosphate + H(+). The enzyme catalyses D-methionine(out) + ATP + H2O = D-methionine(in) + ADP + phosphate + H(+). Its function is as follows. Part of the ABC transporter complex MetNIQ involved in methionine import. Responsible for energy coupling to the transport system. This Brucella abortus (strain 2308) protein is Methionine import ATP-binding protein MetN.